A 60-amino-acid chain; its full sequence is Short neurotoxin 1 (60 aa).

Cystine bridges form between Cys3/Cys22, Cys17/Cys39, Cys41/Cys52, and Cys53/Cys58.

The protein belongs to the three-finger toxin family. Short-chain subfamily. Type I alpha-neurotoxin sub-subfamily. As to expression, expressed by the venom gland.

It is found in the secreted. In terms of biological role, binds to muscle nicotinic acetylcholine receptor (nAChR) and inhibit acetylcholine from binding to the receptor, thereby impairing neuromuscular transmission. The polypeptide is Short neurotoxin 1 (Hydrophis schistosus (Beaked sea snake)).